The following is a 210-amino-acid chain: dTTP/UTP pyrophosphatase (210 aa).

Positions M1–R15 are enriched in basic and acidic residues. The disordered stretch occupies residues M1–L22. D86 functions as the Proton acceptor in the catalytic mechanism.

This sequence belongs to the Maf family. YhdE subfamily. The cofactor is a divalent metal cation.

The protein localises to the cytoplasm. The catalysed reaction is dTTP + H2O = dTMP + diphosphate + H(+). The enzyme catalyses UTP + H2O = UMP + diphosphate + H(+). Nucleoside triphosphate pyrophosphatase that hydrolyzes dTTP and UTP. May have a dual role in cell division arrest and in preventing the incorporation of modified nucleotides into cellular nucleic acids. This Rhodospirillum rubrum (strain ATCC 11170 / ATH 1.1.1 / DSM 467 / LMG 4362 / NCIMB 8255 / S1) protein is dTTP/UTP pyrophosphatase.